An 84-amino-acid polypeptide reads, in one-letter code: NADH-ubiquinone oxidoreductase chain 4L (84 aa).

A run of 2 helical transmembrane segments spans residues 7 to 29 (ILLL…EILL) and 50 to 70 (IFSI…LSIL).

Belongs to the complex I subunit 4L family.

Its subcellular location is the mitochondrion membrane. It carries out the reaction a ubiquinone + NADH + 5 H(+)(in) = a ubiquinol + NAD(+) + 4 H(+)(out). Its function is as follows. Core subunit of the mitochondrial membrane respiratory chain NADH dehydrogenase (Complex I) that is believed to belong to the minimal assembly required for catalysis. Complex I functions in the transfer of electrons from NADH to the respiratory chain. The immediate electron acceptor for the enzyme is believed to be ubiquinone. The polypeptide is NADH-ubiquinone oxidoreductase chain 4L (ND4L) (Candida parapsilosis (Yeast)).